Consider the following 117-residue polypeptide: Cell division protein FtsB (117 aa).

The Cytoplasmic segment spans residues 1–6; sequence MRDWRW. A helical transmembrane segment spans residues 7–24; that stretch reads MLLVLALLLGWLQYRFWF. Topologically, residues 25-117 are periplasmic; the sequence is GPGNSGEVMM…QVGDHPADVP (93 aa). Residues 29-69 are a coiled coil; that stretch reads SGEVMMLEAQVANQERDNEGLQQRNDALAAEVKDLKEGQSA.

Belongs to the FtsB family. As to quaternary structure, part of a complex composed of FtsB, FtsL and FtsQ.

The protein localises to the cell inner membrane. In terms of biological role, essential cell division protein. May link together the upstream cell division proteins, which are predominantly cytoplasmic, with the downstream cell division proteins, which are predominantly periplasmic. The protein is Cell division protein FtsB of Stenotrophomonas maltophilia (strain K279a).